A 231-amino-acid chain; its full sequence is Putative cobalt transport protein CbiM 1 (231 aa).

The next 6 membrane-spanning stretches (helical) occupy residues 6–26 (GFLP…FLIY), 41–61 (VLPL…VDIP), 79–99 (FFGP…QALL), 107–127 (TLGA…WLVF), 136–156 (VPLG…TYLI), and 172–192 (LTAF…ISII).

It belongs to the CbiM family. In terms of assembly, forms an energy-coupling factor (ECF) transporter complex composed of an ATP-binding protein (A component, CbiO), a transmembrane protein (T component, CbiQ) and 2 possible substrate-capture proteins (S components, CbiM and CbiN) of unknown stoichimetry.

The protein localises to the cell membrane. Its pathway is cofactor biosynthesis; adenosylcobalamin biosynthesis. Its function is as follows. Part of the energy-coupling factor (ECF) transporter complex CbiMNOQ involved in cobalt import. This chain is Putative cobalt transport protein CbiM 1, found in Methanocorpusculum labreanum (strain ATCC 43576 / DSM 4855 / Z).